The primary structure comprises 485 residues: Adenosylhomocysteinase (485 aa).

Substrate is bound by residues T60, D146, and E208. NAD(+) is bound at residue 209 to 211 (TTT). The substrate site is built by K238 and D242. NAD(+) contacts are provided by residues N243, 272–277 (GYGDVG), E295, N330, 351–353 (IGH), and N399.

This sequence belongs to the adenosylhomocysteinase family. The cofactor is NAD(+).

The protein resides in the cytoplasm. The catalysed reaction is S-adenosyl-L-homocysteine + H2O = L-homocysteine + adenosine. Its pathway is amino-acid biosynthesis; L-homocysteine biosynthesis; L-homocysteine from S-adenosyl-L-homocysteine: step 1/1. May play a key role in the regulation of the intracellular concentration of adenosylhomocysteine. The chain is Adenosylhomocysteinase from Streptomyces griseus subsp. griseus (strain JCM 4626 / CBS 651.72 / NBRC 13350 / KCC S-0626 / ISP 5235).